The chain runs to 227 residues: SPbeta prophage-derived uncharacterized membrane protein YomJ (227 aa).

A run of 2 helical transmembrane segments spans residues 16-36 and 131-151; these read LFFL…IVGL and GIVA…GLSA.

The protein localises to the cell membrane. This Bacillus subtilis (strain 168) protein is SPbeta prophage-derived uncharacterized membrane protein YomJ (yomJ).